The sequence spans 1342 residues: DNA-directed RNA polymerase subunit beta (1342 aa).

Belongs to the RNA polymerase beta chain family. The RNAP catalytic core consists of 2 alpha, 1 beta, 1 beta' and 1 omega subunit. When a sigma factor is associated with the core the holoenzyme is formed, which can initiate transcription.

It carries out the reaction RNA(n) + a ribonucleoside 5'-triphosphate = RNA(n+1) + diphosphate. Its function is as follows. DNA-dependent RNA polymerase catalyzes the transcription of DNA into RNA using the four ribonucleoside triphosphates as substrates. The polypeptide is DNA-directed RNA polymerase subunit beta (Klebsiella pneumoniae (strain 342)).